The sequence spans 1077 residues: Error-prone DNA polymerase (1077 aa).

This sequence belongs to the DNA polymerase type-C family. DnaE2 subfamily.

It localises to the cytoplasm. The catalysed reaction is DNA(n) + a 2'-deoxyribonucleoside 5'-triphosphate = DNA(n+1) + diphosphate. DNA polymerase involved in damage-induced mutagenesis and translesion synthesis (TLS). It is not the major replicative DNA polymerase. This Brucella melitensis biotype 1 (strain ATCC 23456 / CCUG 17765 / NCTC 10094 / 16M) protein is Error-prone DNA polymerase.